Consider the following 174-residue polypeptide: Gamma-crystallin D (174 aa).

Beta/gamma crystallin 'Greek key' domains are found at residues 2-40 (GKITFYEDRGFQGRHYECSSDHSNLQPYLGRCNSVRVDS) and 41-83 (GCWM…RLIP). The tract at residues 84 to 87 (HAGS) is connecting peptide. 2 consecutive Beta/gamma crystallin 'Greek key' domains span residues 88–128 (HRLR…NVLE) and 129–171 (GSWV…RRVI).

It belongs to the beta/gamma-crystallin family.

Its function is as follows. Crystallins are the dominant structural components of the vertebrate eye lens. This is Gamma-crystallin D (CRYGD) from Bos taurus (Bovine).